Here is a 117-residue protein sequence, read N- to C-terminus: Replication initiation control protein YabA (117 aa).

His-87, Cys-89, Cys-103, and Cys-106 together coordinate Zn(2+).

This sequence belongs to the YabA family. As to quaternary structure, homotetramer. Interacts with both DnaA and DnaN, acting as a bridge between these two proteins. Zn(2+) serves as cofactor.

The protein localises to the cytoplasm. It localises to the nucleoid. Its function is as follows. Involved in control of chromosome replication initiation. Inhibits the cooperative binding of DnaA to the oriC region, thus negatively regulating initiation of chromosome replication. Inhibits the ability of DnaA-ATP to form a helix on DNA; does not disassemble preformed DnaA-DNA helices. Decreases the residence time of DnaA on the chromosome at its binding sites (oriC, replication forks and promoter-binding sites). Tethers DnaA to the replication machinery via the DNA polymerase beta sliding clamp subunit (dnaN). Associates with oriC and other DnaA targets on the chromosome in a DnaA-dependent manner. The protein is Replication initiation control protein YabA of Latilactobacillus sakei subsp. sakei (strain 23K) (Lactobacillus sakei subsp. sakei).